A 443-amino-acid polypeptide reads, in one-letter code: Chromosomal replication initiator protein DnaA (443 aa).

A domain I, interacts with DnaA modulators region spans residues M1–F67. Residues F67–G105 form a domain II region. The interval N106–A323 is domain III, AAA+ region. Positions 151, 153, 154, and 155 each coordinate ATP. The segment at N324–E443 is domain IV, binds dsDNA.

The protein belongs to the DnaA family. As to quaternary structure, oligomerizes as a right-handed, spiral filament on DNA at oriC.

It localises to the cytoplasm. Its function is as follows. Plays an essential role in the initiation and regulation of chromosomal replication. ATP-DnaA binds to the origin of replication (oriC) to initiate formation of the DNA replication initiation complex once per cell cycle. Binds the DnaA box (a 9 base pair repeat at the origin) and separates the double-stranded (ds)DNA. Forms a right-handed helical filament on oriC DNA; dsDNA binds to the exterior of the filament while single-stranded (ss)DNA is stabiized in the filament's interior. The ATP-DnaA-oriC complex binds and stabilizes one strand of the AT-rich DNA unwinding element (DUE), permitting loading of DNA polymerase. After initiation quickly degrades to an ADP-DnaA complex that is not apt for DNA replication. Binds acidic phospholipids. This is Chromosomal replication initiator protein DnaA from Stenotrophomonas maltophilia (strain K279a).